The sequence spans 458 residues: Exodeoxyribonuclease 7 large subunit (458 aa).

It belongs to the XseA family. As to quaternary structure, heterooligomer composed of large and small subunits.

The protein resides in the cytoplasm. It catalyses the reaction Exonucleolytic cleavage in either 5'- to 3'- or 3'- to 5'-direction to yield nucleoside 5'-phosphates.. Bidirectionally degrades single-stranded DNA into large acid-insoluble oligonucleotides, which are then degraded further into small acid-soluble oligonucleotides. This Escherichia coli O81 (strain ED1a) protein is Exodeoxyribonuclease 7 large subunit.